A 384-amino-acid chain; its full sequence is S-adenosylmethionine synthase (384 aa).

Position 15 (His-15) interacts with ATP. Asp-17 is a Mg(2+) binding site. Residue Glu-43 coordinates K(+). Glu-56 and Gln-99 together coordinate L-methionine. The tract at residues 99–109 (QSPDINQGVDR) is flexible loop. Residues 164–166 (DAK), 230–231 (RF), Asp-239, 245–246 (RK), Ala-262, and Lys-266 each bind ATP. An L-methionine-binding site is contributed by Asp-239. Position 270 (Lys-270) interacts with L-methionine.

Belongs to the AdoMet synthase family. As to quaternary structure, homotetramer; dimer of dimers. Mg(2+) serves as cofactor. The cofactor is K(+).

It is found in the cytoplasm. The enzyme catalyses L-methionine + ATP + H2O = S-adenosyl-L-methionine + phosphate + diphosphate. The protein operates within amino-acid biosynthesis; S-adenosyl-L-methionine biosynthesis; S-adenosyl-L-methionine from L-methionine: step 1/1. Its function is as follows. Catalyzes the formation of S-adenosylmethionine (AdoMet) from methionine and ATP. The overall synthetic reaction is composed of two sequential steps, AdoMet formation and the subsequent tripolyphosphate hydrolysis which occurs prior to release of AdoMet from the enzyme. This Klebsiella pneumoniae (strain 342) protein is S-adenosylmethionine synthase.